A 172-amino-acid chain; its full sequence is MDRAQKQELVTTLTDVFKSTSVVVVAHYSGLTVAQLSRLRRQMKASGATVKVAKNRLAKIALEGSDVAHVSSLLKGPTLIAYSSDPVAAPKVAVDFAKTNDKFVILGGAMGTTALNVDGVKALATLPSLDELRAKLVGLIQAPATKIAQVTTAPAAKLARVFGAYAKQDEAA.

This sequence belongs to the universal ribosomal protein uL10 family. As to quaternary structure, part of the ribosomal stalk of the 50S ribosomal subunit. The N-terminus interacts with L11 and the large rRNA to form the base of the stalk. The C-terminus forms an elongated spine to which L12 dimers bind in a sequential fashion forming a multimeric L10(L12)X complex.

In terms of biological role, forms part of the ribosomal stalk, playing a central role in the interaction of the ribosome with GTP-bound translation factors. The sequence is that of Large ribosomal subunit protein uL10 from Xanthobacter autotrophicus (strain ATCC BAA-1158 / Py2).